Here is a 199-residue protein sequence, read N- to C-terminus: Recombination protein RecR (199 aa).

The C4-type zinc finger occupies 58 to 73 (CSVCGNLTDTDVCPLC). The Toprim domain occupies 81–176 (SVICVVEDPR…KTTRIAHGIP (96 aa)).

The protein belongs to the RecR family.

In terms of biological role, may play a role in DNA repair. It seems to be involved in an RecBC-independent recombinational process of DNA repair. It may act with RecF and RecO. This chain is Recombination protein RecR, found in Acetivibrio thermocellus (strain ATCC 27405 / DSM 1237 / JCM 9322 / NBRC 103400 / NCIMB 10682 / NRRL B-4536 / VPI 7372) (Clostridium thermocellum).